The primary structure comprises 112 residues: C-type natriuretic peptide 3 (112 aa).

Positions 1–19 (MSLRAFMLCVCLLLQSVGA) are cleaved as a signal peptide. The propeptide occupies 20 to 90 (RPASELQNLE…SKRSWGRYKK (71 aa)). Residues 33-67 (QDQLSSTEHPEEDRLDRTREEPQLGGSSSREAADE) are disordered. The segment covering 40-54 (EHPEEDRLDRTREEP) has biased composition (basic and acidic residues). The cysteines at positions 96 and 112 are disulfide-linked.

It belongs to the natriuretic peptide family. As to expression, spinal cord, kidney, ovary, heart and spleen, and to a lower extent in brain and liver.

The protein resides in the secreted. In terms of biological role, exhibits natriuretic and vasodepressant activity. Has cGMP-stimulating activity. May help to regulate body fluid homeostasis in a variety of aquatic environments. This is C-type natriuretic peptide 3 from Oryzias latipes (Japanese rice fish).